The following is a 523-amino-acid chain: MKVWNARNDHLTINQWATRIDEILEAPDGGEVIYNVDENDPREYDAIFIGGGAAGRFGSAYLRAMGGRQLIVDRWPFLGGSCPHNACVPHHLFSDCAAELMLARTFSGQYWFPDMTEKVVGIKEVVDLFRAGRNGPHGIMNFQSKEQLNLEYILNCPAKVIDNHTVEAAGKVFKAKNLILAVGAGPGTLDVPGVNAKGVFDHATLVEELDYEPGSTVVVVGGSKTAVEYGCFFNATGRRTVMLVRTEPLKLIKDNETRAYVLDRMKEQGMEIISGSNVTRIEEDANGRVQAVVAMTPNGEMRIETDFVFLGLGEQPRSAELAKILGLDLGPKGEVLVNEYLQTSVPNVYAVGDLIGGPMEMFKARKSGCYAARNVMGEKISYTPKNYPDFLHTHYEVSFLGMGEEEARAAGHEIVTIKMPPDTENGLNVALPASDRTMLYAFGKGTAHMSGFQKIVIDAKTRKVLGAHHVGYGAKDAFQYLNVLIKQGLTVDELGDMDELFLNPTHFIQLSRLRAGSKNLVSL.

53 to 54 (AA) contacts FAD. Arginine 56 contributes to the 2-oxopropyl-coenzyme M binding site. Serine 81 contributes to the FAD binding site. Cysteine 82 lines the 2-oxopropyl-coenzyme M pocket. A disulfide bridge links cysteine 82 with cysteine 87. An FAD-binding site is contributed by alanine 158. Residues 222-225 (GSKT) and 245-246 (RT) each bind NADP(+). Aspartate 353 is an FAD binding site. Residue glutamate 360 coordinates NADP(+). Methionine 361 is an FAD binding site. Residue arginine 365 participates in 2-oxopropyl-coenzyme M binding. FAD is bound at residue phenylalanine 501.

The protein belongs to the class-I pyridine nucleotide-disulfide oxidoreductase family. As to quaternary structure, homodimer. Component II of the aliphatic epoxide carboxylation complex together with components I, III and IV. FAD serves as cofactor.

The catalysed reaction is coenzyme M + acetoacetate + NADP(+) = 2-oxopropyl-coenzyme M + CO2 + NADPH. Its pathway is alkene metabolism; propylene degradation. Inhibited (at 40%) by the coenzyme M analog 2-bromoethanesulfonate (BES). BES is a time-dependent inactivator of dithiothreitol-reduced 2-KPCC, where the redox active cysteines are in the free thiol forms. BES does not inactivate air-oxidized 2-KPCC, where the redox active cysteine pair is in the disulfide form. BES specifically alkylates the interchange thiol that facilitates thioether bond cleavage and enolacetone formation during catalysis. In terms of biological role, involved in aliphatic epoxide carboxylation. Catalyzes the reductive cleavage of the thioether bond of 2-oxopropyl-coenzyme M (2-KPC), and the subsequent carboxylation of the ketopropyl cleavage product, yielding the products acetoacetate and free coenzyme M. The sequence is that of 2-oxopropyl-CoM reductase, carboxylating from Xanthobacter autotrophicus (strain ATCC BAA-1158 / Py2).